The sequence spans 306 residues: Curved DNA-binding protein (306 aa).

Positions 5 to 69 constitute a J domain; it reads DYYAIMGVKP…QRRAEYDQMW (65 aa).

It is found in the cytoplasm. The protein localises to the nucleoid. Functionally, DNA-binding protein that preferentially recognizes a curved DNA sequence. It is probably a functional analog of DnaJ; displays overlapping activities with DnaJ, but functions under different conditions, probably acting as a molecular chaperone in an adaptive response to environmental stresses other than heat shock. Lacks autonomous chaperone activity; binds native substrates and targets them for recognition by DnaK. Its activity is inhibited by the binding of CbpM. In Escherichia coli O7:K1 (strain IAI39 / ExPEC), this protein is Curved DNA-binding protein.